The sequence spans 235 residues: Purine nucleoside phosphorylase DeoD-type (235 aa).

H4 lines the a purine D-ribonucleoside pocket. Phosphate-binding positions include G20, R24, R43, and 87–90 (RVGT). Residues 180 to 182 (EME) and 204 to 205 (SD) each bind a purine D-ribonucleoside. The active-site Proton donor is D205.

The protein belongs to the PNP/UDP phosphorylase family. In terms of assembly, homohexamer; trimer of homodimers.

The catalysed reaction is a purine D-ribonucleoside + phosphate = a purine nucleobase + alpha-D-ribose 1-phosphate. It catalyses the reaction a purine 2'-deoxy-D-ribonucleoside + phosphate = a purine nucleobase + 2-deoxy-alpha-D-ribose 1-phosphate. Functionally, catalyzes the reversible phosphorolytic breakdown of the N-glycosidic bond in the beta-(deoxy)ribonucleoside molecules, with the formation of the corresponding free purine bases and pentose-1-phosphate. In Oceanobacillus iheyensis (strain DSM 14371 / CIP 107618 / JCM 11309 / KCTC 3954 / HTE831), this protein is Purine nucleoside phosphorylase DeoD-type.